The sequence spans 100 residues: Urease subunit gamma (100 aa).

The protein belongs to the urease gamma subunit family. As to quaternary structure, heterotrimer of UreA (gamma), UreB (beta) and UreC (alpha) subunits. Three heterotrimers associate to form the active enzyme.

The protein localises to the cytoplasm. It catalyses the reaction urea + 2 H2O + H(+) = hydrogencarbonate + 2 NH4(+). It participates in nitrogen metabolism; urea degradation; CO(2) and NH(3) from urea (urease route): step 1/1. This is Urease subunit gamma from Pseudomonas entomophila (strain L48).